The sequence spans 192 residues: Large ribosomal subunit protein uL3 (192 aa).

This sequence belongs to the universal ribosomal protein uL3 family. As to quaternary structure, part of the 50S ribosomal subunit. Forms a cluster with proteins L14 and L19.

Functionally, one of the primary rRNA binding proteins, it binds directly near the 3'-end of the 23S rRNA, where it nucleates assembly of the 50S subunit. The sequence is that of Large ribosomal subunit protein uL3 (rplC) from Wolinella succinogenes (strain ATCC 29543 / DSM 1740 / CCUG 13145 / JCM 31913 / LMG 7466 / NCTC 11488 / FDC 602W) (Vibrio succinogenes).